We begin with the raw amino-acid sequence, 327 residues long: DNA-directed RNA polymerase subunit alpha (327 aa).

Positions 1-231 (MIYQMQMPAK…DHVTFFANFS (231 aa)) are alpha N-terminal domain (alpha-NTD). Residues 252–327 (MRRLFHTKIE…GMDITKYQMK (76 aa)) form an alpha C-terminal domain (alpha-CTD) region.

It belongs to the RNA polymerase alpha chain family. In terms of assembly, homodimer. The RNAP catalytic core consists of 2 alpha, 1 beta, 1 beta' and 1 omega subunit. When a sigma factor is associated with the core the holoenzyme is formed, which can initiate transcription.

The enzyme catalyses RNA(n) + a ribonucleoside 5'-triphosphate = RNA(n+1) + diphosphate. DNA-dependent RNA polymerase catalyzes the transcription of DNA into RNA using the four ribonucleoside triphosphates as substrates. This chain is DNA-directed RNA polymerase subunit alpha, found in Pelodictyon phaeoclathratiforme (strain DSM 5477 / BU-1).